The chain runs to 210 residues: High frequency lysogenization protein HflD homolog (210 aa).

Residues 103–130 are a coiled coil; the sequence is EAKAKLAERLQQIERQLPLYENDIMADQ.

It belongs to the HflD family.

The protein localises to the cytoplasm. It localises to the cell inner membrane. The chain is High frequency lysogenization protein HflD homolog from Actinobacillus pleuropneumoniae serotype 3 (strain JL03).